Here is a 206-residue protein sequence, read N- to C-terminus: dITP/XTP pyrophosphatase (206 aa).

7–12 (SNNAKK) is a binding site for substrate. Aspartate 72 acts as the Proton acceptor in catalysis. A Mg(2+)-binding site is contributed by aspartate 72. Substrate is bound by residues serine 73, 155–158 (FGYD), lysine 182, and 187–188 (HR).

It belongs to the HAM1 NTPase family. Homodimer. Mg(2+) serves as cofactor.

It carries out the reaction XTP + H2O = XMP + diphosphate + H(+). The catalysed reaction is dITP + H2O = dIMP + diphosphate + H(+). The enzyme catalyses ITP + H2O = IMP + diphosphate + H(+). Its function is as follows. Pyrophosphatase that catalyzes the hydrolysis of nucleoside triphosphates to their monophosphate derivatives, with a high preference for the non-canonical purine nucleotides XTP (xanthosine triphosphate), dITP (deoxyinosine triphosphate) and ITP. Seems to function as a house-cleaning enzyme that removes non-canonical purine nucleotides from the nucleotide pool, thus preventing their incorporation into DNA/RNA and avoiding chromosomal lesions. This Corynebacterium glutamicum (strain ATCC 13032 / DSM 20300 / JCM 1318 / BCRC 11384 / CCUG 27702 / LMG 3730 / NBRC 12168 / NCIMB 10025 / NRRL B-2784 / 534) protein is dITP/XTP pyrophosphatase.